Consider the following 87-residue polypeptide: Acyl-CoA-binding protein 2 (87 aa).

Residues 2–87 (VSQLFEEKAK…VDNLIAKYSS (86 aa)) enclose the ACB domain. An acyl-CoA-binding positions include 29–33 (YGLYK), lysine 51, lysine 55, and tyrosine 74.

This sequence belongs to the ACBP family.

Functionally, binds medium- and long-chain acyl-CoA esters with very high affinity and may function as an intracellular carrier of acyl-CoA esters. The polypeptide is Acyl-CoA-binding protein 2 (ACB2) (Saccharomyces pastorianus (strain ATCC 76670 / Carlsberg bottom yeast no.2 / CBS 1503 / CLIB 180 / NBRC 10610 / NRRL Y-1525) (Saaz-type lager yeast)).